We begin with the raw amino-acid sequence, 613 residues long: DNA polymerase II small subunit (613 aa).

This sequence belongs to the DNA polymerase delta/II small subunit family. In terms of assembly, heterodimer of a large subunit and a small subunit.

The catalysed reaction is DNA(n) + a 2'-deoxyribonucleoside 5'-triphosphate = DNA(n+1) + diphosphate. It catalyses the reaction Exonucleolytic cleavage in the 3'- to 5'-direction to yield nucleoside 5'-phosphates.. Possesses two activities: a DNA synthesis (polymerase) and an exonucleolytic activity that degrades single-stranded DNA in the 3' to 5' direction. Has a template-primer preference which is characteristic of a replicative DNA polymerase. The sequence is that of DNA polymerase II small subunit (polB) from Pyrococcus furiosus (strain ATCC 43587 / DSM 3638 / JCM 8422 / Vc1).